Consider the following 328-residue polypeptide: scyllo-inositol 2-dehydrogenase (NADP(+)) IolU (328 aa).

This sequence belongs to the Gfo/Idh/MocA family.

The enzyme catalyses scyllo-inositol + NADP(+) = scyllo-inosose + NADPH + H(+). Catalyzes the NADPH-dependent reduction of scyllo-inosose (SIS) to scyllo-inositol (SI) in vitro, but is unable to dehydrogenate scyllo-inositol and myo-inositol. Is less efficient than the functional paralog IolW. Under physiological conditions, may primarily function as an NADPH-dependent oxidoreductase that reduces carbonyl group(s) in its substrates. Cannot use NADH instead of NADPH. The polypeptide is scyllo-inositol 2-dehydrogenase (NADP(+)) IolU (Bacillus subtilis (strain 168)).